A 107-amino-acid chain; its full sequence is Glutaredoxin-1 (107 aa).

Ala-2 carries the post-translational modification N-acetylalanine. The 104-residue stretch at 3 to 106 folds into the Glutaredoxin domain; it reads QEFVNCKIQS…ARLKQIGALQ (104 aa). Lys-9 is subject to N6-succinyllysine. Cystine bridges form between Cys-23–Cys-26 and Cys-79–Cys-83.

It belongs to the glutaredoxin family.

Its subcellular location is the cytoplasm. In terms of biological role, has a glutathione-disulfide oxidoreductase activity in the presence of NADPH and glutathione reductase. Reduces low molecular weight disulfides and proteins. The sequence is that of Glutaredoxin-1 (Glrx) from Rattus norvegicus (Rat).